Here is a 225-residue protein sequence, read N- to C-terminus: Testis-expressed protein 30 (225 aa).

The chain is Testis-expressed protein 30 (Tex30) from Mus musculus (Mouse).